The following is a 168-amino-acid chain: Protein C2-DOMAIN ABA-RELATED 1 (168 aa).

Residue M1 is modified to N-acetylmethionine. Residues 1–104 (MENLVGLLRI…EAIKFAHQLG (104 aa)) enclose the C2 domain. Residues R21, D22, D27, D73, Y74, D75, and D81 each coordinate Ca(2+).

Belongs to the plant CAR protein family. In terms of assembly, dimers and oligomers. Binds to PYR/PYL/RCAR abscisic acid intracellular receptors in an ABA-independent manner, both at the plasma membrane and in the nucleus. Interacts directly with PYR1, PYL1, PYL4, PYL6 and PYL8. Binds phospholipids in a Ca(2+)-dependent manner. It depends on Ca(2+) as a cofactor. As to expression, expressed in roots.

It is found in the cell membrane. The protein resides in the nucleus. In terms of biological role, stimulates the GTPase/ATPase activities of Obg-like ATPases. Mediates the transient calcium-dependent interaction of PYR/PYL/RCAR abscisic acid (ABA) receptors with the plasma membrane and thus regulates ABA sensitivity. Binds liposomes in the absence of exogenous Ca(2+), but this activity is enhanced in the presence of Ca(2+) and generates membrane curvature. This is Protein C2-DOMAIN ABA-RELATED 1 from Arabidopsis thaliana (Mouse-ear cress).